The primary structure comprises 391 residues: Small ribosomal subunit protein mS29 (391 aa).

Residues 1 to 17 constitute a mitochondrion transit peptide; sequence MLTGITRLFSRVQKLDP. The segment at 30 to 59 is disordered; it reads NSQVPAERPRTVSRTSDSDPAKHGEQHEGQ. The span at 45 to 59 shows a compositional bias: basic and acidic residues; the sequence is SDSDPAKHGEQHEGQ. Residues Lys168 and Lys200 each carry the N6-acetyllysine modification.

The protein belongs to the mitochondrion-specific ribosomal protein mS29 family. Component of the mitochondrial ribosome small subunit (28S) which comprises a 12S rRNA and about 30 distinct proteins. Interacts with DELE1. Interacts with NOA1.

Its subcellular location is the mitochondrion. The enzyme catalyses GTP + H2O = GDP + phosphate + H(+). Functionally, as a component of the mitochondrial small ribosomal subunit, it plays a role in the translation of mitochondrial mRNAs. Involved in mediating interferon-gamma-induced cell death. Displays GTPase activity in vitro. The polypeptide is Small ribosomal subunit protein mS29 (Mus musculus (Mouse)).